A 271-amino-acid polypeptide reads, in one-letter code: Mannosyl-3-phosphoglycerate phosphatase (271 aa).

D13 acts as the Nucleophile in catalysis. Positions 13, 15, and 214 each coordinate Mg(2+).

It belongs to the HAD-like hydrolase superfamily. MPGP family. Mg(2+) is required as a cofactor.

The protein localises to the cytoplasm. It catalyses the reaction 2-O-(alpha-D-mannosyl)-3-phosphoglycerate + H2O = (2R)-2-O-(alpha-D-mannosyl)-glycerate + phosphate. The protein is Mannosyl-3-phosphoglycerate phosphatase of Escherichia coli (strain 55989 / EAEC).